Reading from the N-terminus, the 573-residue chain is Isocitrate dehydrogenase kinase/phosphatase (573 aa).

Residues 317-323 and Lys-338 contribute to the ATP site; that span reads APGVRGM. The active site involves Asp-373.

The protein belongs to the AceK family.

The protein resides in the cytoplasm. It catalyses the reaction L-seryl-[isocitrate dehydrogenase] + ATP = O-phospho-L-seryl-[isocitrate dehydrogenase] + ADP + H(+). In terms of biological role, bifunctional enzyme which can phosphorylate or dephosphorylate isocitrate dehydrogenase (IDH) on a specific serine residue. This is a regulatory mechanism which enables bacteria to bypass the Krebs cycle via the glyoxylate shunt in response to the source of carbon. When bacteria are grown on glucose, IDH is fully active and unphosphorylated, but when grown on acetate or ethanol, the activity of IDH declines drastically concomitant with its phosphorylation. This Pseudomonas fluorescens (strain ATCC BAA-477 / NRRL B-23932 / Pf-5) protein is Isocitrate dehydrogenase kinase/phosphatase.